Here is a 63-residue protein sequence, read N- to C-terminus: Cytochrome c oxidase subunit 7C, mitochondrial (63 aa).

A mitochondrion-targeting transit peptide spans 1 to 16 (MLGQSIRRFTTSVVRR). The Mitochondrial matrix portion of the chain corresponds to 17–33 (SHYEEGPGKNIPFSVEN). Lys25 bears the N6-acetyllysine; alternate mark. Lys25 carries the post-translational modification N6-succinyllysine; alternate. Residues 34–60 (KWRLLAMMTLFFGSGFAAPFFIVRHQL) form a helical membrane-spanning segment. Topologically, residues 61-63 (LKK) are mitochondrial intermembrane.

This sequence belongs to the cytochrome c oxidase VIIc family. Component of the cytochrome c oxidase (complex IV, CIV), a multisubunit enzyme composed of 14 subunits. The complex is composed of a catalytic core of 3 subunits MT-CO1, MT-CO2 and MT-CO3, encoded in the mitochondrial DNA, and 11 supernumerary subunits COX4I1 (or COX4I2), COX5A, COX5B, COX6A2 (or COX6A1), COX6B1 (or COX6B2), COX6C, COX7A1 (or COX7A2), COX7B, COX7C, COX8B and NDUFA4, which are encoded in the nuclear genome. The complex exists as a monomer or a dimer and forms supercomplexes (SCs) in the inner mitochondrial membrane with NADH-ubiquinone oxidoreductase (complex I, CI) and ubiquinol-cytochrome c oxidoreductase (cytochrome b-c1 complex, complex III, CIII), resulting in different assemblies (supercomplex SCI(1)III(2)IV(1) and megacomplex MCI(2)III(2)IV(2)). Interacts with RAB5IF. In terms of tissue distribution, liver, heart, muscle and brain, contain the same isoform of COX VIIc, but at different concentrations.

Its subcellular location is the mitochondrion inner membrane. It functions in the pathway energy metabolism; oxidative phosphorylation. In terms of biological role, component of the cytochrome c oxidase, the last enzyme in the mitochondrial electron transport chain which drives oxidative phosphorylation. The respiratory chain contains 3 multisubunit complexes succinate dehydrogenase (complex II, CII), ubiquinol-cytochrome c oxidoreductase (cytochrome b-c1 complex, complex III, CIII) and cytochrome c oxidase (complex IV, CIV), that cooperate to transfer electrons derived from NADH and succinate to molecular oxygen, creating an electrochemical gradient over the inner membrane that drives transmembrane transport and the ATP synthase. Cytochrome c oxidase is the component of the respiratory chain that catalyzes the reduction of oxygen to water. Electrons originating from reduced cytochrome c in the intermembrane space (IMS) are transferred via the dinuclear copper A center (CU(A)) of subunit 2 and heme A of subunit 1 to the active site in subunit 1, a binuclear center (BNC) formed by heme A3 and copper B (CU(B)). The BNC reduces molecular oxygen to 2 water molecules using 4 electrons from cytochrome c in the IMS and 4 protons from the mitochondrial matrix. The protein is Cytochrome c oxidase subunit 7C, mitochondrial (COX7C) of Bos taurus (Bovine).